The sequence spans 94 residues: Pyrimidine/purine nucleoside phosphorylase (94 aa).

It belongs to the nucleoside phosphorylase PpnP family.

The catalysed reaction is a purine D-ribonucleoside + phosphate = a purine nucleobase + alpha-D-ribose 1-phosphate. It carries out the reaction adenosine + phosphate = alpha-D-ribose 1-phosphate + adenine. It catalyses the reaction cytidine + phosphate = cytosine + alpha-D-ribose 1-phosphate. The enzyme catalyses guanosine + phosphate = alpha-D-ribose 1-phosphate + guanine. The catalysed reaction is inosine + phosphate = alpha-D-ribose 1-phosphate + hypoxanthine. It carries out the reaction thymidine + phosphate = 2-deoxy-alpha-D-ribose 1-phosphate + thymine. It catalyses the reaction uridine + phosphate = alpha-D-ribose 1-phosphate + uracil. The enzyme catalyses xanthosine + phosphate = alpha-D-ribose 1-phosphate + xanthine. Its function is as follows. Catalyzes the phosphorolysis of diverse nucleosides, yielding D-ribose 1-phosphate and the respective free bases. Can use uridine, adenosine, guanosine, cytidine, thymidine, inosine and xanthosine as substrates. Also catalyzes the reverse reactions. This Salmonella heidelberg (strain SL476) protein is Pyrimidine/purine nucleoside phosphorylase.